We begin with the raw amino-acid sequence, 156 residues long: MSTSICPCGSGNLLDACCGHYHAGHPAPCATALMRSRYSAYVLGLVDYLVATTLPAQQAGLDRHAIGAWSAQSTWLGLEVESSEVFGGQPEHAFVTFTARWHDSTGEHSHREQSSFVQNDGRWYFIDPTVEVKVGRNDACLCGSGQKFKKCCSSYL.

It belongs to the UPF0225 family.

The protein is UPF0225 protein PFLU_1319 of Pseudomonas fluorescens (strain SBW25).